The primary structure comprises 373 residues: Cytoplasmic tRNA 2-thiolation protein 1 (373 aa).

Belongs to the TtcA family. CTU1/NCS6/ATPBD3 subfamily.

It localises to the cytoplasm. Its pathway is tRNA modification; 5-methoxycarbonylmethyl-2-thiouridine-tRNA biosynthesis. Functionally, plays a central role in 2-thiolation of mcm(5)S(2)U at tRNA wobble positions of tRNA(Lys), tRNA(Glu) and tRNA(Gln). Directly binds tRNAs and probably acts by catalyzing adenylation of tRNAs, an intermediate required for 2-thiolation. It is unclear whether it acts as a sulfurtransferase that transfers sulfur from thiocarboxylated URM1 onto the uridine of tRNAs at wobble position. Prior mcm(5) tRNA modification by the elongator complex is required for 2-thiolation. May also be involved in protein urmylation. This Eremothecium gossypii (strain ATCC 10895 / CBS 109.51 / FGSC 9923 / NRRL Y-1056) (Yeast) protein is Cytoplasmic tRNA 2-thiolation protein 1.